A 96-amino-acid polypeptide reads, in one-letter code: Co-chaperonin GroES (96 aa).

It belongs to the GroES chaperonin family. In terms of assembly, heptamer of 7 subunits arranged in a ring. Interacts with the chaperonin GroEL.

It localises to the cytoplasm. Its function is as follows. Together with the chaperonin GroEL, plays an essential role in assisting protein folding. The GroEL-GroES system forms a nano-cage that allows encapsulation of the non-native substrate proteins and provides a physical environment optimized to promote and accelerate protein folding. GroES binds to the apical surface of the GroEL ring, thereby capping the opening of the GroEL channel. This is Co-chaperonin GroES from Nitrosospira multiformis (strain ATCC 25196 / NCIMB 11849 / C 71).